The chain runs to 287 residues: Melatonin receptor type 1B-A (287 aa).

At 1–28 (MPENVSLIRNRTEVGQGRAWGSGAGARP) the chain is on the extracellular side. Residues N4 and N10 are each glycosylated (N-linked (GlcNAc...) asparagine). Residues 29-49 (AWVVMVLAGVLIFTSVVDVLG) form a helical membrane-spanning segment. Over 50–69 (NVLVIISVLRNRKLRNAGNA) the chain is Cytoplasmic. The chain crosses the membrane as a helical span at residues 70 to 90 (FVVSLAFADLLVVCYPYPLVL). Over 91 to 107 (HAMLHAGWLPGEMECKV) the chain is Extracellular. An intrachain disulfide couples C105 to C182. A helical transmembrane segment spans residues 108-128 (SGFLMGASVIGSIFNITAIAI). Topologically, residues 129–149 (NRYCFICQANTYEKIYGRAGT) are cytoplasmic. Residues 150 to 170 (LVLLTLVWVLTAIAILPNLSL) traverse the membrane as a helical segment. The Extracellular portion of the chain corresponds to 171–192 (GSLTYDPRVYSCTFSQTTSAGY). A helical membrane pass occupies residues 193–213 (TIAVVTVHFLLPIAVVTFCYL). Residues 214–245 (RIWVLVLRVRRRVTTDVRPRLRPSELRHFLTM) are Cytoplasmic-facing. A helical membrane pass occupies residues 246–266 (FVVFVLFAVCWAPLNLIGLAV). Over 267-275 (AVDPPRVGP) the chain is Extracellular. A helical transmembrane segment spans residues 276–287 (LVPDWLFVMSYF).

Belongs to the G-protein coupled receptor 1 family.

Its subcellular location is the cell membrane. In terms of biological role, high affinity receptor for melatonin. The activity of this receptor is mediated by pertussis toxin sensitive G proteins that inhibits adenylate cyclase activity. The chain is Melatonin receptor type 1B-A (mtnr1ba) from Danio rerio (Zebrafish).